The chain runs to 500 residues: Glycerol kinase (500 aa).

Thr13 contributes to the ADP binding site. Thr13, Thr14, and Ser15 together coordinate ATP. Residue Thr13 participates in sn-glycerol 3-phosphate binding. Arg17 provides a ligand contact to ADP. Arg83, Glu84, Tyr135, and Asp244 together coordinate sn-glycerol 3-phosphate. Glycerol is bound by residues Arg83, Glu84, Tyr135, Asp244, and Gln245. Residues Thr266 and Gly309 each contribute to the ADP site. 4 residues coordinate ATP: Thr266, Gly309, Gln313, and Gly410. The ADP site is built by Gly410 and Asn414.

This sequence belongs to the FGGY kinase family.

The catalysed reaction is glycerol + ATP = sn-glycerol 3-phosphate + ADP + H(+). It functions in the pathway polyol metabolism; glycerol degradation via glycerol kinase pathway; sn-glycerol 3-phosphate from glycerol: step 1/1. Its activity is regulated as follows. Inhibited by fructose 1,6-bisphosphate (FBP). Key enzyme in the regulation of glycerol uptake and metabolism. Catalyzes the phosphorylation of glycerol to yield sn-glycerol 3-phosphate. The protein is Glycerol kinase of Burkholderia ambifaria (strain ATCC BAA-244 / DSM 16087 / CCUG 44356 / LMG 19182 / AMMD) (Burkholderia cepacia (strain AMMD)).